The chain runs to 153 residues: MTKIKADPDGPEAQAEACSGERTYQELLVNQNPIAQPLASRRLTRKLYKCIKKAVKQKQIRRGVKEVQKFVNKGEKGIMVLAGDTLPIEVYCHLPVMCEDRNLPYVYIPSKTDLGAAAGSKRPTCVIMVKPHEEYQEAYDECLEEVQSLPLPL.

K3 participates in a covalent cross-link: Glycyl lysine isopeptide (Lys-Gly) (interchain with G-Cter in SUMO2). K5 participates in a covalent cross-link: Glycyl lysine isopeptide (Lys-Gly) (interchain with G-Cter in SUMO); alternate. K5 is covalently cross-linked (Glycyl lysine isopeptide (Lys-Gly) (interchain with G-Cter in SUMO1); alternate). Residue K5 forms a Glycyl lysine isopeptide (Lys-Gly) (interchain with G-Cter in SUMO2); alternate linkage. S19 is subject to Phosphoserine.

This sequence belongs to the eukaryotic ribosomal protein eL8 family. As to quaternary structure, part of the H/ACA small nucleolar ribonucleoprotein (H/ACA snoRNP) complex, which contains NHP2/NOLA2, GAR1/NOLA1, NOP10/NOLA3, and DKC1/NOLA4, which is presumed to be the catalytic subunit. The complex contains a stable core formed by binding of one or two NOP10-DKC1 heterodimers to NHP2; GAR1 subsequently binds to this core via DKC1. The complex binds a box H/ACA small nucleolar RNA (snoRNA), which may target the specific site of modification within the RNA substrate. During assembly, the complex contains NAF1 instead of GAR1/NOLA1. The complex also interacts with TERC, which contains a 3'-terminal domain related to the box H/ACA snoRNAs. Specific interactions with snoRNAs or TERC are mediated by GAR1 and NHP2. Associates with NOLC1/NOPP140. H/ACA snoRNPs interact with the SMN complex, consisting of SMN1 or SMN2, GEMIN2/SIP1, DDX20/GEMIN3, and GEMIN4. This is mediated by interaction between GAR1 and SMN1 or SMN2. The SMN complex may be required for correct assembly of the H/ACA snoRNP complex. Component of the telomerase holoenzyme complex composed of one molecule of TERT, one molecule of WRAP53/TCAB1, two molecules of H/ACA ribonucleoprotein complex subunits DKC1, NOP10, NHP2 and GAR1, and a telomerase RNA template component (TERC). The telomerase holoenzyme complex is associated with TEP1, SMG6/EST1A and POT1. Expressed in brain, colon, heart, kidney, ovary, pancreas, placenta, prostate, skeletal muscle, small intestine, spleen, testis and thymus. Also expressed at lower levels in the liver.

It localises to the nucleus. The protein resides in the nucleolus. It is found in the cajal body. In terms of biological role, required for ribosome biogenesis and telomere maintenance. Part of the H/ACA small nucleolar ribonucleoprotein (H/ACA snoRNP) complex, which catalyzes pseudouridylation of rRNA. This involves the isomerization of uridine such that the ribose is subsequently attached to C5, instead of the normal N1. Each rRNA can contain up to 100 pseudouridine ('psi') residues, which may serve to stabilize the conformation of rRNAs. May also be required for correct processing or intranuclear trafficking of TERC, the RNA component of the telomerase reverse transcriptase (TERT) holoenzyme. This Homo sapiens (Human) protein is H/ACA ribonucleoprotein complex subunit 2 (NHP2).